The sequence spans 130 residues: Small ribosomal subunit protein uS4 (130 aa).

N6-acetyllysine is present on Lys64. Lys91 participates in a covalent cross-link: Glycyl lysine isopeptide (Lys-Gly) (interchain with G-Cter in SUMO2). The S4 RNA-binding domain occupies 106–130 (RRLQTQVFKLGLAXSIHHXRVLIRQ). Position 114 is an N6-acetyllysine (Lys114).

This sequence belongs to the universal ribosomal protein uS4 family. In terms of assembly, component of the small ribosomal subunit. Identified in a IGF2BP1-dependent mRNP granule complex containing untranslated mRNAs. Part of the small subunit (SSU) processome, composed of more than 70 proteins and the RNA chaperone small nucleolar RNA (snoRNA) U3.

It localises to the cytoplasm. The protein localises to the nucleus. It is found in the nucleolus. Its function is as follows. Component of the small ribosomal subunit. The ribosome is a large ribonucleoprotein complex responsible for the synthesis of proteins in the cell. Part of the small subunit (SSU) processome, first precursor of the small eukaryotic ribosomal subunit. During the assembly of the SSU processome in the nucleolus, many ribosome biogenesis factors, an RNA chaperone and ribosomal proteins associate with the nascent pre-rRNA and work in concert to generate RNA folding, modifications, rearrangements and cleavage as well as targeted degradation of pre-ribosomal RNA by the RNA exosome. The polypeptide is Small ribosomal subunit protein uS4 (RPS9) (Sus scrofa (Pig)).